We begin with the raw amino-acid sequence, 375 residues long: Alcohol dehydrogenase 1 (375 aa).

Ser2 carries the post-translational modification N-acetylserine. Residues Cys47, His68, Cys98, Cys101, Cys104, Cys112, and Cys175 each coordinate Zn(2+). Residues 200–205 (GLGGVG), Asp224, and Lys229 contribute to the NAD(+) site. Residue Lys234 is modified to N6-succinyllysine. 293-295 (VGV) provides a ligand contact to NAD(+). N6-succinyllysine is present on Lys340. Residue Arg370 coordinates NAD(+).

Belongs to the zinc-containing alcohol dehydrogenase family. Homodimer. The cofactor is Zn(2+).

It is found in the cytoplasm. It catalyses the reaction a primary alcohol + NAD(+) = an aldehyde + NADH + H(+). The catalysed reaction is a secondary alcohol + NAD(+) = a ketone + NADH + H(+). In Oryctolagus cuniculus (Rabbit), this protein is Alcohol dehydrogenase 1 (ADH1).